Consider the following 185-residue polypeptide: Translocon-associated protein subunit gamma (185 aa).

An N-acetylmethionine modification is found at Met-1. The Lumenal segment spans residues 1-27; the sequence is MAPKGSCKQQSEEDLLLQDFSRNLSAK. Ser-11 is modified (phosphoserine). The helical transmembrane segment at 28–48 threads the bilayer; sequence SSALFFGNAFIVSAIPIWLYW. At 49-54 the chain is on the cytoplasmic side; the sequence is RIWHMD. The helical transmembrane segment at 55 to 76 threads the bilayer; sequence LIQSAVLYSVMTLVSTYLVAFA. At 77-135 the chain is on the lumenal side; sequence YKNVKFVLKHKVAQKREDAVSKEVTRKLSEADNRKMSRKEKDERILWKKNEVADYEATT. Phosphoserine is present on Ser-105. Residues 136–157 form a helical membrane-spanning segment; it reads FSIFYNNTLFLVVVIVASFFIL. Over 158 to 163 the chain is Cytoplasmic; the sequence is KNFNPT. The chain crosses the membrane as a helical span at residues 164-184; it reads VNYILSISASSGLIALLSTGS.

The protein belongs to the TRAP-gamma family. Heterotetramer of TRAP-alpha, TRAP-beta, TRAP-delta and TRAP-gamma.

The protein resides in the endoplasmic reticulum membrane. Its function is as follows. TRAP proteins are part of a complex whose function is to bind calcium to the ER membrane and thereby regulate the retention of ER resident proteins. In Pongo abelii (Sumatran orangutan), this protein is Translocon-associated protein subunit gamma (SSR3).